Consider the following 213-residue polypeptide: Ribosomal RNA small subunit methyltransferase G (213 aa).

S-adenosyl-L-methionine-binding positions include glycine 72, phenylalanine 77, 125–126 (IE), and arginine 141.

The protein belongs to the methyltransferase superfamily. RNA methyltransferase RsmG family.

The protein resides in the cytoplasm. It carries out the reaction guanosine(527) in 16S rRNA + S-adenosyl-L-methionine = N(7)-methylguanosine(527) in 16S rRNA + S-adenosyl-L-homocysteine. Its function is as follows. Specifically methylates the N7 position of guanine in position 527 of 16S rRNA. The chain is Ribosomal RNA small subunit methyltransferase G from Sinorhizobium medicae (strain WSM419) (Ensifer medicae).